The primary structure comprises 909 residues: MASLIGSAKLPFNNEVELISDEIEKGLNDSTTIRKFFEKRAQIEEEYAKNLQKLCKATPILLKSGGTSDAFSMIVESTNQFSNHTISTIQRFNQDVNDPLAGFIKDLRGELKQYSLEGQNLAKERKQAFDSLKSSKALYEQMCNNPESDVMKVQQSEEEYKLQVQACNQYHSLYHQEKLPKIQNEIIRLETVRMQKMKTNLKKYITEFESIPQKQQQSIKDSEELINSIDTKQDIQSFTNFNKTLNTPTPDFQFESCESINGGGGGAAGRKSKKGGWRQTISVLKIGNAFMKDDGTIVNGNSSLNSSSSNINILNNPIVFKIPIEEIMFKQKSKFPNLDIPYILVLLVNLIKKLDNGMGMKTEGIFRIPGHTSEVNALKKLINEQGEYQFPPDLYSIHPIASLLKLWLREMPQPLIPNYVYDKSLECQSIEEFIVFFKFLPASNQKIITYLAGFLNELVQPDNVVTSKMNLDNVAMVFAPSFLRCDSQDMILANVDREKTLVKLIIEGYLKLSDVCPIQLDDIDSKIQIPSFSNNNNNSTTTTTTTTTTTVPSSTSTNITTNGASALGAESSTTPLPSLTTFSQSQSSSPPNQPSPSITPQQVSNLPPSYQPPQPPPTMAPPPLFNIPQQQQQQQVTNNNNSGGYTPPPLQYTQSSSNLPPIQLGVTNSPSKPQLSDKQKEKEKEKEKEKEKEKEREKEKEKEKEKEKEKEKEKEKKGHKKSSSSTSPNSSSLSISNFLSSNKDKDKEKDKEKEKEKEKEKDKEILATNSTPEKPVSNRMSLIFSQQLQQQLQQQIQQHQQLQQQSNGSPTSPISPSSANNSPSMSPSMVKRTIRPNLPPLQSGTSATTSSSSLTSSSSPTLTSSKDNIQKQQLPELNQQQQQQSPQAELKSSGIKSLLQRVPPPPSQS.

An F-BAR domain is found at 1-257; the sequence is MASLIGSAKL…PTPDFQFESC (257 aa). The Rho-GAP domain maps to 322–513; that stretch reads IPIEEIMFKQ…LIIEGYLKLS (192 aa). The disordered stretch occupies residues 529-909; sequence IPSFSNNNNN…QRVPPPPSQS (381 aa). Composition is skewed to low complexity over residues 533–562 and 571–602; these read SNNNNNSTTTTTTTTTTTVPSSTSTNITTN and SSTTPLPSLTTFSQSQSSSPPNQPSPSITPQQ. A compositionally biased stretch (pro residues) spans 609–625; it reads SYQPPQPPPTMAPPPLF. Residues 651-674 are compositionally biased toward polar residues; sequence QYTQSSSNLPPIQLGVTNSPSKPQ. The stretch at 672–809 forms a coiled coil; that stretch reads KPQLSDKQKE…QQLQQQSNGS (138 aa). A compositionally biased stretch (basic and acidic residues) spans 675 to 716; sequence LSDKQKEKEKEKEKEKEKEKEREKEKEKEKEKEKEKEKEKEK. Over residues 723 to 741 the composition is skewed to low complexity; the sequence is SSSTSPNSSSLSISNFLSS. Positions 742–765 are enriched in basic and acidic residues; that stretch reads NKDKDKEKDKEKEKEKEKEKDKEI. The span at 767–785 shows a compositional bias: polar residues; it reads ATNSTPEKPVSNRMSLIFS. Composition is skewed to low complexity over residues 786–828 and 843–892; these read QQLQ…MSPS and SGTS…ELKS.

The protein resides in the cytoplasm. It localises to the contractile vacuole. Its function is as follows. Rho GTPase-activating protein involved in the signal transduction pathway. This Dictyostelium discoideum (Social amoeba) protein is GTPase activating protein homolog 4 (mgp4).